Consider the following 220-residue polypeptide: Ras-related protein Rab-3A (220 aa).

11 residues coordinate GTP: S31, S32, V33, G34, K35, T36, S37, T48, P49, S53, and T54. T36 contacts Mg(2+). A Switch 1 motif is present at residues 49–58 (PAFVSTVGID). Mg(2+)-binding residues include T54 and D77. G80 serves as a coordination point for GTP. A Switch 2 motif is present at residues 80-96 (GQERYRTITTAYYRGAM). T86 carries the phosphothreonine modification. GTP is bound by residues N135, K136, D138, A166, and K167. A phosphoserine mark is found at S188 and S190. The disordered stretch occupies residues 194–220 (ADPAVTGAKQGPQLTDQQAPPHQDCAC). 2 S-geranylgeranyl cysteine lipidation sites follow: C218 and C220. At C220 the chain carries Cysteine methyl ester.

The protein belongs to the small GTPase superfamily. Rab family. In terms of assembly, interacts with RIMS1 and RIMS2. Interacts with Rabphilin-3A/RPH3A and Rab effector Noc2/RPH3AL. Interacts with SYTL4. Interacts with RAB3IP. Interacts with SGSM1 and SGSM3. Interacts with SYT1. Interacts with MYH9; this interaction is essential for lysosome exocytosis and plasma membrane repair. Interacts with STXBP1; this interaction promotes RAB3A dissociation from the vesicle membrane. Interacts with SNCA. Interacts with GDI1, GDI2, CHM and CHML; phosphorylation at Thr-86 disrupts these interactions. Interacts with MADD (via uDENN domain); the GTP-bound form is preferred for interaction. The cofactor is Mg(2+). Post-translationally, phosphorylation of Thr-86 in the switch II region by LRRK2 prevents the association of RAB regulatory proteins, including CHM, CHML and RAB GDP dissociation inhibitors GDI1 and GDI2. As to expression, specifically expressed in brain.

It localises to the cytoplasm. It is found in the cytosol. Its subcellular location is the lysosome. The protein localises to the cytoplasmic vesicle. The protein resides in the secretory vesicle. It localises to the cell projection. It is found in the axon. Its subcellular location is the cell membrane. The protein localises to the presynapse. The protein resides in the postsynapse. The enzyme catalyses GTP + H2O = GDP + phosphate + H(+). Its activity is regulated as follows. Regulated by guanine nucleotide exchange factors (GEFs) including RAB3IL1 and MADD which promote the exchange of bound GDP for free GTP. Regulated by GTPase activating proteins (GAPs) including RAB3GAP1 and TBC1D10B which increase the GTP hydrolysis activity. Inhibited by GDP dissociation inhibitors (GDIs) which prevent Rab-GDP dissociation. In terms of biological role, the small GTPases Rab are key regulators of intracellular membrane trafficking, from the formation of transport vesicles to their fusion with membranes. Rabs cycle between an inactive GDP-bound form and an active GTP-bound form that is able to recruit to membranes different sets of downstream effectors directly responsible for vesicle formation, movement, tethering and fusion. RAB3A plays a central role in regulated exocytosis and secretion. Controls the recruitment, tethering and docking of secretory vesicles to the plasma membrane. Upon stimulation, switches to its active GTP-bound form, cycles to vesicles and recruits effectors such as RIMS1, RIMS2, Rabphilin-3A/RPH3A, RPH3AL or SYTL4 to help the docking of vesicules onto the plasma membrane. Upon GTP hydrolysis by GTPase-activating protein, dissociates from the vesicle membrane allowing the exocytosis to proceed. Stimulates insulin secretion through interaction with RIMS2 or RPH3AL effectors in pancreatic beta cells. Regulates calcium-dependent lysosome exocytosis and plasma membrane repair (PMR) via the interaction with 2 effectors, SYTL4 and myosin-9/MYH9. Acts as a positive regulator of acrosome content secretion in sperm cells by interacting with RIMS1. Also plays a role in the regulation of dopamine release by interacting with synaptotagmin I/SYT. The protein is Ras-related protein Rab-3A (RAB3A) of Bos taurus (Bovine).